We begin with the raw amino-acid sequence, 41 residues long: Large ribosomal subunit protein bL36 (41 aa).

It belongs to the bacterial ribosomal protein bL36 family.

The chain is Large ribosomal subunit protein bL36 from Hyphomonas neptunium (strain ATCC 15444).